A 591-amino-acid chain; its full sequence is Probable translation initiation factor IF-2 (591 aa).

Residues 7-223 (LRTPIVCVMG…LLGLAQRFLE (217 aa)) form the tr-type G domain. Positions 16 to 23 (GHVDHGKT) are G1. Residue 16–23 (GHVDHGKT) participates in GTP binding. Residues 41–45 (AITQH) form a G2 region. Positions 78–81 (DTPG) are G3. Residues 78-82 (DTPGH) and 132-135 (NKID) contribute to the GTP site. The G4 stretch occupies residues 132–135 (NKID). Positions 200–202 (SAI) are G5.

The protein belongs to the TRAFAC class translation factor GTPase superfamily. Classic translation factor GTPase family. IF-2 subfamily.

In terms of biological role, function in general translation initiation by promoting the binding of the formylmethionine-tRNA to ribosomes. Seems to function along with eIF-2. The protein is Probable translation initiation factor IF-2 of Methanococcoides burtonii (strain DSM 6242 / NBRC 107633 / OCM 468 / ACE-M).